The primary structure comprises 202 residues: Ras-related protein RABD2c (202 aa).

GTP contacts are provided by residues 15–23 (GDSGVGKSC), 33–40 (YLDSYIST), 63–67 (DTAGQ), 121–124 (NKCD), and 151–153 (SAK). Positions 37-45 (YISTIGVDF) match the Effector region motif. Residues 174–202 (ASQPAGGSKPPTVQIRGQPVNQQSGCCSS) are disordered. A compositionally biased stretch (polar residues) spans 192–202 (PVNQQSGCCSS). 2 S-geranylgeranyl cysteine lipidation sites follow: C199 and C200.

The protein belongs to the small GTPase superfamily. Rab family.

The protein localises to the cell membrane. It is found in the golgi apparatus. Its subcellular location is the trans-Golgi network membrane. The protein resides in the golgi apparatus membrane. Its function is as follows. Protein transport. Regulator of membrane traffic from the Golgi apparatus towards the endoplasmic reticulum (ER). This chain is Ras-related protein RABD2c (RABD2C), found in Arabidopsis thaliana (Mouse-ear cress).